Here is a 233-residue protein sequence, read N- to C-terminus: MREEAMKKQGVLVAPSIMGADLACIGREARNIEESGADLIHIDVMDGHFVPNITFGPGVVAAINRSTELFLEVHAMIYTPFEFVEAFVKAGADRIIVHFEAAENIKEIISYIQKCGVQAGVAFSPETSIEFVTSFIPLCDVILLMSVHPGFCGQKFIPDTIERIQFVKQAIQVLGREGSCLIEVDGGIDKESARACREAGADILVAASYFFEKDSINMKEKVLLLQGEEHGAK.

Residue serine 16 participates in substrate binding. 3 residues coordinate a divalent metal cation: histidine 41, aspartate 43, and histidine 74. Catalysis depends on aspartate 43, which acts as the Proton acceptor. Substrate is bound by residues histidine 74, 150–153, 185–187, and 207–208; these read GFCG, DGG, and AS. Aspartate 185 is an a divalent metal cation binding site. Aspartate 185 acts as the Proton donor in catalysis.

This sequence belongs to the ribulose-phosphate 3-epimerase family. A divalent metal cation is required as a cofactor.

The enzyme catalyses D-ribulose 5-phosphate = D-xylulose 5-phosphate. Its pathway is carbohydrate degradation. Its function is as follows. Catalyzes the reversible epimerization of D-ribulose 5-phosphate to D-xylulose 5-phosphate. This is Ribulose-phosphate 3-epimerase from Chlamydia trachomatis serovar D (strain ATCC VR-885 / DSM 19411 / UW-3/Cx).